The following is a 55-amino-acid chain: uncharacterized protein (55 aa).

Residues 27–44 (SFWFILISASSFLIYSLF) form a helical membrane-spanning segment.

It is found in the membrane. This is an uncharacterized protein from Dictyostelium discoideum (Social amoeba).